Here is a 250-residue protein sequence, read N- to C-terminus: 1-(5-phosphoribosyl)-5-[(5-phosphoribosylamino)methylideneamino] imidazole-4-carboxamide isomerase (250 aa).

Catalysis depends on aspartate 7, which acts as the Proton acceptor. The active-site Proton donor is aspartate 129.

This sequence belongs to the HisA/HisF family.

It localises to the cytoplasm. The enzyme catalyses 1-(5-phospho-beta-D-ribosyl)-5-[(5-phospho-beta-D-ribosylamino)methylideneamino]imidazole-4-carboxamide = 5-[(5-phospho-1-deoxy-D-ribulos-1-ylimino)methylamino]-1-(5-phospho-beta-D-ribosyl)imidazole-4-carboxamide. The protein operates within amino-acid biosynthesis; L-histidine biosynthesis; L-histidine from 5-phospho-alpha-D-ribose 1-diphosphate: step 4/9. This Shewanella denitrificans (strain OS217 / ATCC BAA-1090 / DSM 15013) protein is 1-(5-phosphoribosyl)-5-[(5-phosphoribosylamino)methylideneamino] imidazole-4-carboxamide isomerase.